Here is a 33-residue protein sequence, read N- to C-terminus: U1-pseudomyrmecitoxin-Pt1 subunit LS2 (33 aa).

Belongs to the myrmexin family. As to quaternary structure, heterodimer composed of subunit LS2 and subunit SS1, heterodimer composed of subunit LS2 and SS2, and heterodimer composed of subunit LS2 and SS3; disulfide-linked. Expressed by the venom gland.

The protein resides in the secreted. In terms of biological role, this heterodimer may have anti-inflammatory properties, since the myrmexin complex (composed of 6 SS-LS heterodimers) inhibits carrageenin-induced edema in a dose-dependent manner (after subcutaneous injection into rats). This Pseudomyrmex triplarinus (Ant) protein is U1-pseudomyrmecitoxin-Pt1 subunit LS2.